A 218-amino-acid chain; its full sequence is Large ribosomal subunit protein uL3 (218 aa).

The tract at residues 126–163 (HGFSRGPMTHGSKNHRQPGSIGAGTTPGRIYPGKRMSG) is disordered.

The protein belongs to the universal ribosomal protein uL3 family. In terms of assembly, part of the 50S ribosomal subunit. Forms a cluster with proteins L14 and L19.

In terms of biological role, one of the primary rRNA binding proteins, it binds directly near the 3'-end of the 23S rRNA, where it nucleates assembly of the 50S subunit. This is Large ribosomal subunit protein uL3 from Synechococcus sp. (strain CC9311).